A 418-amino-acid chain; its full sequence is AA11 family lytic polysaccharide monooxygenase B (418 aa).

The N-terminal stretch at 1-21 (MMFSKSGLVAVAMLGASAVEA) is a signal peptide. 2 residues coordinate Cu(+): His-22 and His-82. Intrachain disulfides connect Cys-50–Cys-165, Cys-87–Cys-113, and Cys-206–Cys-240. N-linked (GlcNAc...) asparagine glycans are attached at residues Asn-120 and Asn-134. The interval 226–345 (DGNPSNLQPA…SSSSSNGALT (120 aa)) is disordered. Residues 254–345 (SPSTPSTSSS…SSSSSNGALT (92 aa)) are compositionally biased toward low complexity.

It belongs to the polysaccharide monooxygenase AA11 family. Requires Cu(2+) as cofactor.

It is found in the secreted. Its function is as follows. Lytic polysaccharide monooxygenase (LPMO)-like protein that acts as a strict peroxygenase and does not catalyze a monooxygenase reaction. It is indeed hardly active on chitin, while being very active on soluble oligomers of N-acetylglucosamine. Cleaves the glycosidic bonds byoxidizing the C1 position. Also unable to oxidize cellopentaose. Probably breaks glycosidic bonds in non-polymeric substrates possibly carbohydrates in the cell wall of the fungus or its competitors. In the presence of chitotetraose, the enzyme can withstand considerable amounts of H(2)O(2), which it uses to efficiently and stoichiometrically convert this substrate. The protein is AA11 family lytic polysaccharide monooxygenase B of Aspergillus fumigatus (strain ATCC MYA-4609 / CBS 101355 / FGSC A1100 / Af293) (Neosartorya fumigata).